The primary structure comprises 158 residues: C-type lectin (158 aa).

A signal peptide spans 1–23; that stretch reads MWQFTVVSLGWLAVFLSLSGAKG. 3 cysteine pairs are disulfide-bonded: Cys26–Cys37, Cys54–Cys154, and Cys129–Cys146. The C-type lectin domain maps to 33-155; it reads RNGVCNKLFP…CASLHPFICQ (123 aa). The Mannose-binding signature appears at 119 to 121; the sequence is EPN. Ca(2+) is bound by residues Glu127, Asn142, and Asp143.

Belongs to the true venom lectin family. Expressed by the venom gland.

It localises to the secreted. Functionally, mannose-binding lectin which recognizes specific carbohydrate structures and agglutinates a variety of animal cells by binding to cell-surface glycoproteins and glycolipids. May be a calcium-dependent lectin. This is C-type lectin from Cerberus rynchops (Dog-faced water snake).